Reading from the N-terminus, the 571-residue chain is RNA polymerase sigma factor SigA (571 aa).

A sigma-70 factor domain-2 region spans residues 321–391 (MVESNLRLVI…TRAIADQART (71 aa)). The Interaction with polymerase core subunit RpoC motif lies at 345-348 (DLIQ). The segment at 400–476 (ETINKVLRGA…DTAVESPAEA (77 aa)) is sigma-70 factor domain-3. Positions 489–542 (VLKTLTDRERFVLIHRFGLLDGRPKTLEEVGSAFNVTRERIRQIEAKALRKMRH) are sigma-70 factor domain-4. The H-T-H motif DNA-binding region spans 515–534 (LEEVGSAFNVTRERIRQIEA).

The protein belongs to the sigma-70 factor family. RpoD/SigA subfamily. As to quaternary structure, interacts transiently with the RNA polymerase catalytic core.

The protein localises to the cytoplasm. Functionally, sigma factors are initiation factors that promote the attachment of RNA polymerase to specific initiation sites and are then released. This sigma factor is the primary sigma factor during exponential growth. This is RNA polymerase sigma factor SigA from Chlamydia muridarum (strain MoPn / Nigg).